A 131-amino-acid polypeptide reads, in one-letter code: MIKLRLKRFGKKREASFRLVACNSTSRRDGRPLQELGFYNPRTKETRLDTEALRLRLSQGAQPTDAVRSLLEKGGLLEKTIRPAELIGKSKQEELRKSEAKTSAKNKKANEEKANEEKVEESETLEASSEA.

Over residues 87–117 (IGKSKQEELRKSEAKTSAKNKKANEEKANEE) the composition is skewed to basic and acidic residues. Positions 87-131 (IGKSKQEELRKSEAKTSAKNKKANEEKANEEKVEESETLEASSEA) are disordered.

This sequence belongs to the bacterial ribosomal protein bS16 family.

In Prochlorococcus marinus (strain SARG / CCMP1375 / SS120), this protein is Small ribosomal subunit protein bS16.